We begin with the raw amino-acid sequence, 423 residues long: Lysosomal acid phosphatase (423 aa).

A signal peptide spans 1–30; it reads MAGKRSGWSRAALLQLLLGVNLVVMPPTQA. The Lumenal portion of the chain corresponds to 31 to 380; sequence RSLRFVTLLY…QVASGPADTE (350 aa). The Nucleophile role is filled by His42. Asn92, Asn133, Asn167, Asn177, Asn191, and Asn267 each carry an N-linked (GlcNAc...) asparagine glycan. Intrachain disulfides connect Cys159-Cys370, Cys212-Cys310, and Cys345-Cys349. The Proton donor role is filled by Asp287. 2 N-linked (GlcNAc...) asparagine glycosylation sites follow: Asn322 and Asn331. A helical membrane pass occupies residues 381 to 401; the sequence is VIVALAVCGSILFLLIVLLLT. The Cytoplasmic portion of the chain corresponds to 402–423; sequence VLFRMQAQPPGYRHVADGEDHA.

This sequence belongs to the histidine acid phosphatase family. In terms of processing, the membrane-bound form is converted to the soluble form by sequential proteolytic processing. First, the C-terminal cytoplasmic tail is removed. Cleavage by a lysosomal protease releases the soluble form in the lysosome lumen.

It is found in the lysosome membrane. The protein resides in the lysosome lumen. The enzyme catalyses a phosphate monoester + H2O = an alcohol + phosphate. The protein is Lysosomal acid phosphatase (ACP2) of Pongo abelii (Sumatran orangutan).